Consider the following 147-residue polypeptide: Protein-export protein SecB 2 (147 aa).

It belongs to the SecB family. In terms of assembly, homotetramer, a dimer of dimers. One homotetramer interacts with 1 SecA dimer.

Its subcellular location is the cytoplasm. Its function is as follows. One of the proteins required for the normal export of preproteins out of the cell cytoplasm. It is a molecular chaperone that binds to a subset of precursor proteins, maintaining them in a translocation-competent state. It also specifically binds to its receptor SecA. This chain is Protein-export protein SecB 2, found in Francisella tularensis subsp. holarctica (strain FTNF002-00 / FTA).